Consider the following 357-residue polypeptide: Iron deficiency-induced protein A (357 aa).

The segment at residues 1 to 36 (MSESMFSRRDFLLGGTALAGTLLLDSFGDWRRRAEA) is a signal peptide (tat-type signal). 5 residues coordinate Fe cation: His-48, Tyr-49, Tyr-182, Tyr-238, and Tyr-239.

It belongs to the bacterial solute-binding protein 1 family. In terms of processing, predicted to be exported by the Tat system. The position of the signal peptide cleavage has not been experimentally proven.

Its subcellular location is the cellular thylakoid membrane. Functionally, plays an important role in protecting the acceptor side of photosystem II (PSII) against oxidative damage, especially under iron-limiting growth conditions. In terms of biological role, may also be part of a periplasmic ABC transporter complex involved in iron import. The polypeptide is Iron deficiency-induced protein A (idiA) (Synechococcus elongatus (strain ATCC 33912 / PCC 7942 / FACHB-805) (Anacystis nidulans R2)).